The following is a 301-amino-acid chain: Protein p34 (301 aa).

Transmembrane regions (helical) follow at residues Tyr15 to Thr35, Ile40 to Ala60, Thr83 to Val103, Thr120 to Ile140, and Leu171 to Phe191.

Belongs to the cation diffusion facilitator (CDF) transporter (TC 2.A.4) family.

Its subcellular location is the cell membrane. The sequence is that of Protein p34 (p34) from Rickettsia rickettsii (strain Sheila Smith).